A 330-amino-acid polypeptide reads, in one-letter code: Peptide transport system ATP-binding protein SapD (330 aa).

Residues 6 to 259 form the ABC transporter domain; sequence IRNLTIEFKT…PHHPYTQALI (254 aa). Residue 40–47 participates in ATP binding; that stretch reads GESGSGKS.

This sequence belongs to the ABC transporter superfamily.

The protein resides in the cell inner membrane. Involved in a peptide intake transport system that plays a role in the resistance to antimicrobial peptides. In Salmonella typhimurium (strain LT2 / SGSC1412 / ATCC 700720), this protein is Peptide transport system ATP-binding protein SapD.